Here is a 205-residue protein sequence, read N- to C-terminus: Gap junction epsilon-1 protein (205 aa).

Over 1–22 (MSLNYIKNFYEGCVKPPTVIGQ) the chain is Cytoplasmic. Residues 23-43 (FHTLFFGSVRMFFLGVLGFAV) traverse the membrane as a helical segment. The Extracellular segment spans residues 44 to 74 (YGNEALHFSCDPDKREINLFCYNQFRPITPQ). Disulfide bonds link Cys53–Cys161 and Cys64–Cys147. Residues 75–95 (VFWALQLVIVLLPGAIFHLYA) form a helical membrane-spanning segment. The Cytoplasmic portion of the chain corresponds to 96–111 (ACKSINQDCILQKPVY). Residues 112-132 (TVIYVLSVLLRISLEVFAFWL) form a helical membrane-spanning segment. The Extracellular portion of the chain corresponds to 133 to 170 (QIHLFGFQVKPIYLCDTESLGKKPNILKCMVPEHFEKT). A helical membrane pass occupies residues 171 to 191 (IFLIAMYTFTVITMVLCVAEV). Residues 192–205 (FEIIFRRSCFLFKR) lie on the Cytoplasmic side of the membrane.

Belongs to the connexin family. Beta-type (group I) subfamily. As to quaternary structure, a connexon is composed of a hexamer of connexins. Highly expressed in lens, where it is mainly found in lens fibers and to a lesser extent in lens epithelium. Weakly expressed in retina. Not detected in other tissues tested.

The protein localises to the cell membrane. In terms of biological role, mediates calcium-independent ATP release, suggesting activity as a hemichannel. Does not form functional gap junctions. May play a non-essential role in eye lens development. This chain is Gap junction epsilon-1 protein, found in Mus musculus (Mouse).